The sequence spans 157 residues: uncharacterized protein (157 aa).

K115 is covalently cross-linked (Isoglutamyl lysine isopeptide (Lys-Gln) (interchain with Q-Cter in protein Pup)).

This is an uncharacterized protein from Mycolicibacterium smegmatis (strain ATCC 700084 / mc(2)155) (Mycobacterium smegmatis).